Here is a 503-residue protein sequence, read N- to C-terminus: Sugar phosphate exchanger 3 (503 aa).

A helical membrane pass occupies residues 20–40 (YTHHHLAAFLLTFFSYSLLHA). N-linked (GlcNAc...) asparagine glycans are attached at residues N62 and N71. The next 5 membrane-spanning stretches (helical) occupy residues 87 to 107 (TLFL…GLFI), 119 to 139 (LVLT…GTLT), 152 to 172 (LVWI…VAIM), 183 to 203 (FVFG…AFLA), and 214 to 234 (AFLV…FGLV). N275 carries N-linked (GlcNAc...) asparagine glycosylation. The next 6 membrane-spanning stretches (helical) occupy residues 300–322 (GVLL…FFWL), 342–362 (IWYD…SDLM), 367–387 (PVLT…SHSP), 395–415 (FIMS…SSAI), 437–457 (GIVD…VPLI), and 466–486 (VFYF…PLIV).

It belongs to the major facilitator superfamily. Organophosphate:Pi antiporter (OPA) (TC 2.A.1.4) family.

The protein localises to the endoplasmic reticulum membrane. It is found in the lysosome membrane. In terms of biological role, unlike the other SLC37 members, seems to lack glucose-6-phosphate antiporter activity. This chain is Sugar phosphate exchanger 3 (slc37a3), found in Xenopus laevis (African clawed frog).